The chain runs to 603 residues: Threonine--tRNA ligase (603 aa).

The interval Asp209–Pro500 is catalytic. Positions 301, 352, and 477 each coordinate Zn(2+).

It belongs to the class-II aminoacyl-tRNA synthetase family. As to quaternary structure, homodimer. It depends on Zn(2+) as a cofactor.

It is found in the cytoplasm. It carries out the reaction tRNA(Thr) + L-threonine + ATP = L-threonyl-tRNA(Thr) + AMP + diphosphate + H(+). Its function is as follows. Catalyzes the attachment of threonine to tRNA(Thr) in a two-step reaction: L-threonine is first activated by ATP to form Thr-AMP and then transferred to the acceptor end of tRNA(Thr). Also edits incorrectly charged L-seryl-tRNA(Thr). The chain is Threonine--tRNA ligase from Campylobacter lari (strain RM2100 / D67 / ATCC BAA-1060).